The following is a 323-amino-acid chain: PTS system mannose-specific EIIAB component (323 aa).

The region spanning 2–124 is the PTS EIIA type-4 domain; the sequence is TIAIVIGTHG…VALAVETGRE (123 aa). The active-site Tele-phosphohistidine intermediate; for EIIA activity is the histidine 10. Histidine 10 carries the phosphohistidine; by HPr modification. At lysine 55 the chain carries N6-acetyllysine. The segment at 137–155 is hinge; that stretch reads AAPAPAAAAPKAAPTPAKP. Positions 157 to 320 constitute a PTS EIIB type-4 domain; the sequence is GPNDYMVIGL…KLKMMDLISK (164 aa). Histidine 175 functions as the Pros-phosphohistidine intermediate; for EIIB activity in the catalytic mechanism. Histidine 175 is subject to Phosphohistidine; by EIIA. Position 234 is an N6-acetyllysine (lysine 234).

Homodimer.

The protein resides in the cytoplasm. Its subcellular location is the cell inner membrane. The enzyme catalyses D-mannose(out) + N(pros)-phospho-L-histidyl-[protein] = D-mannose 6-phosphate(in) + L-histidyl-[protein]. In terms of biological role, the phosphoenolpyruvate-dependent sugar phosphotransferase system (sugar PTS), a major carbohydrate active transport system, catalyzes the phosphorylation of incoming sugar substrates concomitantly with their translocation across the cell membrane. The enzyme II ManXYZ PTS system is involved in mannose transport. In Escherichia coli O157:H7, this protein is PTS system mannose-specific EIIAB component (manX).